Reading from the N-terminus, the 126-residue chain is Nascent polypeptide-associated complex protein (126 aa).

An NAC-A/B domain is found at 10 to 77 (PRMMKQMQKM…AKKVAKEEEK (68 aa)).

The protein belongs to the NAC-alpha family. Homodimer. Interacts with the ribosome. Binds ribosomal RNA.

Its function is as follows. Contacts the emerging nascent chain on the ribosome. This is Nascent polypeptide-associated complex protein from Methanococcus maripaludis (strain DSM 14266 / JCM 13030 / NBRC 101832 / S2 / LL).